The primary structure comprises 612 residues: Siderophore iron transporter 1 (612 aa).

A phosphoserine mark is found at serine 5, serine 21, serine 22, serine 36, and serine 41. 14 consecutive transmembrane segments (helical) span residues 91-111 (ISFY…SFQA), 125-145 (FAGH…SAAI), 159-179 (LEAF…MAAS), 188-208 (GSVL…IFMA), 218-238 (LVLG…PRVA), 249-269 (WGIA…LAVY), 299-319 (IIGL…ISLA), 331-351 (FIVM…YEIF), 365-385 (EPTI…FYCW), 406-426 (YISY…GILI), 434-453 (WYFV…MIRY), 464-484 (IMPQ…LTVA), 495-515 (AIVT…GSAI), and 573-593 (ILTS…WFVA).

Belongs to the major facilitator superfamily.

It localises to the membrane. Involved in the transport of siderophore iron and so has a role in iron homeostasis. The protein is Siderophore iron transporter 1 (str1) of Schizosaccharomyces pombe (strain 972 / ATCC 24843) (Fission yeast).